The sequence spans 271 residues: Large ribosomal subunit protein uL2cz/uL2cy (271 aa).

2 disordered regions span residues Met-1 to Val-22 and Pro-223 to Lys-271.

It belongs to the universal ribosomal protein uL2 family. In terms of assembly, part of the 50S ribosomal subunit.

It is found in the plastid. The protein resides in the chloroplast. The chain is Large ribosomal subunit protein uL2cz/uL2cy (rpl2-A) from Sorghum bicolor (Sorghum).